A 283-amino-acid polypeptide reads, in one-letter code: uncharacterized protein (283 aa).

This is an uncharacterized protein from Methanocaldococcus jannaschii (strain ATCC 43067 / DSM 2661 / JAL-1 / JCM 10045 / NBRC 100440) (Methanococcus jannaschii).